The chain runs to 258 residues: Tryptophan synthase alpha chain (258 aa).

Active-site proton acceptor residues include Glu-47 and Asp-58.

It belongs to the TrpA family. In terms of assembly, tetramer of two alpha and two beta chains.

The catalysed reaction is (1S,2R)-1-C-(indol-3-yl)glycerol 3-phosphate + L-serine = D-glyceraldehyde 3-phosphate + L-tryptophan + H2O. It participates in amino-acid biosynthesis; L-tryptophan biosynthesis; L-tryptophan from chorismate: step 5/5. In terms of biological role, the alpha subunit is responsible for the aldol cleavage of indoleglycerol phosphate to indole and glyceraldehyde 3-phosphate. The sequence is that of Tryptophan synthase alpha chain from Bacillus thuringiensis (strain Al Hakam).